The sequence spans 293 residues: 4-hydroxy-tetrahydrodipicolinate synthase (293 aa).

Thr-45 contacts pyruvate. The Proton donor/acceptor role is filled by Tyr-133. The Schiff-base intermediate with substrate role is filled by Lys-161. Ile-204 is a binding site for pyruvate.

This sequence belongs to the DapA family. In terms of assembly, homotetramer; dimer of dimers.

The protein resides in the cytoplasm. It catalyses the reaction L-aspartate 4-semialdehyde + pyruvate = (2S,4S)-4-hydroxy-2,3,4,5-tetrahydrodipicolinate + H2O + H(+). It functions in the pathway amino-acid biosynthesis; L-lysine biosynthesis via DAP pathway; (S)-tetrahydrodipicolinate from L-aspartate: step 3/4. Catalyzes the condensation of (S)-aspartate-beta-semialdehyde [(S)-ASA] and pyruvate to 4-hydroxy-tetrahydrodipicolinate (HTPA). This chain is 4-hydroxy-tetrahydrodipicolinate synthase, found in Edwardsiella ictaluri (strain 93-146).